Reading from the N-terminus, the 1042-residue chain is Exosome RNA helicase MTR4 (1042 aa).

An N-acetylalanine modification is found at Ala-2. Positions 16–74 are disordered; sequence DSTTAAGTKKDKEKDKGKWKGPPGSADKAGKRFDGKLQSESTNNGKNKRDVDFEGTDEP. Basic and acidic residues predominate over residues 23-33; the sequence is TKKDKEKDKGK. A Glycyl lysine isopeptide (Lys-Gly) (interchain with G-Cter in SUMO2) cross-link involves residue Lys-24. Ser-40 is subject to Phosphoserine. The span at 43-52 shows a compositional bias: basic and acidic residues; sequence KAGKRFDGKL. N6-acetyllysine is present on residues Lys-51 and Lys-78. ATP-binding positions include Ile-139, 161–168, Ser-164, Gly-166, Lys-167, and Thr-168; that span reads AHTSAGKT. In terms of domain architecture, Helicase ATP-binding spans 148–304; the sequence is IQCVDNNQSV…WICHLHKQPC (157 aa). The DEIH box signature appears at 252 to 255; that stretch reads DEIH. A Glycyl lysine isopeptide (Lys-Gly) (interchain with G-Cter in SUMO2) cross-link involves residue Lys-358. A Helicase C-terminal domain is found at 405 to 577; the sequence is QMTKLDFNTD…NMVLNLLRVE (173 aa). Glycyl lysine isopeptide (Lys-Gly) (interchain with G-Cter in SUMO2) cross-links involve residues Lys-684 and Lys-723.

It belongs to the helicase family. SKI2 subfamily. In terms of assembly, component of a TRAMP-like complex, an ATP-dependent exosome regulatory complex consisting of a helicase (MTREX), an oligadenylate polymerase (TENT4B or TENT4A), and a substrate specific RNA-binding factor (ZCCHC7 or ZCCHC8). Several TRAMP-like complexes exist with specific compositions and are associated with nuclear, or nucleolar RNA exosomes. Identified in the spliceosome C complex. Component of the poly(A) tail exosome targeting (PAXT) complex made of PABPN1, ZFC3H1 and MTREX that directs a subset of long and polyadenylated poly(A) RNAs for exosomal degradation. Component of the nuclear exosome targeting (NEXT) complex composed of MTREX, ZCCHC8, and RBM7 that directs a subset of non-coding short-lived RNAs for exosomal degradation. Interacts with ZCCHC8; this interaction bridges the interaction between RBM7 and MTREX. Binds to ZFC3H1 and RBM7 in a RNase-insensitive manner. Interacts with EXOSC10; the interaction mediates the association of MTREX with nuclear RNA exosomes. Interacts with isoform 1 of NVL in an ATP-dependent manner; the interaction is required to associate NVL with nuclear RNA exosome. Interacts with WDR74; the interaction dissociation in a late stage of rRNA synthesis is required for appropriate maturation of pre-60S particles and depends on the ATPase activity of NVL. Interacts with MPHOSPH6. Interacts with the RNA cap-binding complex proteins NCBP1 and SRRT. Interacts with NRDE2; the interaction is direct and negatively regulates MTREX function in exosomal degradation by changing its conformation precluding interaction with ZFC3H1, the RNA cap-binding complex proteins NCBP1 and SRRT, and association with the exosome. Associates with the RNA exosome complex.

The protein localises to the nucleus. Its subcellular location is the nucleoplasm. The protein resides in the nucleolus. It localises to the nucleus speckle. The enzyme catalyses ATP + H2O = ADP + phosphate + H(+). With respect to regulation, activated when MTREX is incorporated into NEXT complex an the nuclear RNA exosome complex. In terms of biological role, catalyzes the ATP-dependent unwinding of RNA duplexes with a single-stranded 3' RNA extension. Central subunit of many protein complexes, namely TRAMP-like, nuclear exosome targeting (NEXT) and poly(A) tail exosome targeting (PAXT). NEXT functions as an RNA exosome cofactor that directs a subset of non-coding short-lived RNAs for exosomal degradation. NEXT is involved in surveillance and turnover of aberrant transcripts and non-coding RNAs. PAXT directs a subset of long and polyadenylated poly(A) RNAs for exosomal degradation. The RNA exosome is fundamental for the degradation of RNA in eukaryotic nuclei. Substrate targeting is facilitated by its cofactor ZCCHC8, which links to RNA-binding protein adapters. Associated with the RNA exosome complex and involved in the 3'-processing of the 7S pre-RNA to the mature 5.8S rRNA. May be involved in pre-mRNA splicing. In the context of NEXT complex can also in vitro unwind DNA:RNA heteroduplexes with a 3' poly (A) RNA tracking strand. Can promote unwinding and degradation of structured RNA substrates when associated with the nuclear exosome and its cofactors. Can displace a DNA strand while translocating on RNA to ultimately degrade the RNA within a DNA/RNA heteroduplex. Plays a role in DNA damage response. The polypeptide is Exosome RNA helicase MTR4 (Homo sapiens (Human)).